The chain runs to 120 residues: Aspartate 1-decarboxylase (120 aa).

The active-site Schiff-base intermediate with substrate; via pyruvic acid is S25. S25 carries the pyruvic acid (Ser) modification. T57 is a binding site for substrate. The active-site Proton donor is Y58. G73–A75 is a substrate binding site.

This sequence belongs to the PanD family. As to quaternary structure, heterooctamer of four alpha and four beta subunits. Pyruvate is required as a cofactor. In terms of processing, is synthesized initially as an inactive proenzyme, which is activated by self-cleavage at a specific serine bond to produce a beta-subunit with a hydroxyl group at its C-terminus and an alpha-subunit with a pyruvoyl group at its N-terminus.

Its subcellular location is the cytoplasm. It carries out the reaction L-aspartate + H(+) = beta-alanine + CO2. Its pathway is cofactor biosynthesis; (R)-pantothenate biosynthesis; beta-alanine from L-aspartate: step 1/1. Its function is as follows. Catalyzes the pyruvoyl-dependent decarboxylation of aspartate to produce beta-alanine. The sequence is that of Aspartate 1-decarboxylase from Ralstonia pickettii (strain 12J).